The primary structure comprises 354 residues: Serum paraoxonase/arylesterase 2 (354 aa).

C42 and C352 are joined by a disulfide. Ca(2+) is bound by residues E53 and D54. H114 serves as the catalytic Proton acceptor. I116, N167, D168, and N223 together coordinate Ca(2+). N-linked (GlcNAc...) asparagine glycosylation is present at N254. D268 and N269 together coordinate Ca(2+). N269 and N323 each carry an N-linked (GlcNAc...) asparagine glycan.

The protein belongs to the paraoxonase family. In terms of assembly, homotrimer. Requires Ca(2+) as cofactor. The signal sequence is not cleaved. In terms of tissue distribution, widely expressed with highest expression in liver, lung, placenta, testis and heart.

The protein localises to the membrane. It carries out the reaction a phenyl acetate + H2O = a phenol + acetate + H(+). It catalyses the reaction an N-acyl-L-homoserine lactone + H2O = an N-acyl-L-homoserine + H(+). Functionally, capable of hydrolyzing lactones and a number of aromatic carboxylic acid esters. Has antioxidant activity. Is not associated with high density lipoprotein. Prevents LDL lipid peroxidation, reverses the oxidation of mildly oxidized LDL, and inhibits the ability of MM-LDL to induce monocyte chemotaxis. The protein is Serum paraoxonase/arylesterase 2 (PON2) of Homo sapiens (Human).